The primary structure comprises 577 residues: MRFSSIFRNTPIQFSNRRSSVKLLHSLPRLKPTNSKRFSQKPKLVKTQTLPDPSVYTRDIVSNIYNILKYSNWDSAQEQLPHLGVRWDSHIINRVLKAHPPMQKAWLFFNWAAQIKGFKHDHFTYTTMLDIFGEAGRIQSMYSVFHLMKEKGVLIDTVTYTSLIHWVSSSGDVDGAMRLWEEMRDNGCEPTVVSYTAYMKMLFADGRVEEATEVYKEMLRSRVSPNCHTYTVLMEYLVATGKCEEALDIFFKMQEIGVQPDKAACNILIAKALKFGETSFMTRVLVYMKENGVVLRYPIFVEALETLKAAGESDDLLREVNSHISVESLCSSDIDETPTAEVNDTKNSDDSRVISSVLLMKQNLVAVDILLNQMRDRNIKLDSFVVSAIIETNCDRCRTEGASLAFDYSLEMGIHLKKSAYLALIGNFLRSNELPKVIEVVKEMVKAQHSLGCYQGAMLIHRLGFGRRPRLAADVFDLLPDDQKGVAAYTALMDVYISAGSPEKAMKILREMREREIMPSLGTYDVLLSGLEKTSDFQKEVALLRKEKKSLVASARFRENVHVEDKICDLLFATNLL.

PPR repeat units lie at residues 121–155 (DHFT…GVLI), 156–190 (DTVT…GCEP), 191–225 (TVVS…RVSP), 226–260 (NCHT…GVQP), 261–295 (DKAA…GVVL), 382–416 (DSFV…GIHL), 417–451 (KKSA…QHSL), 452–482 (GCYQ…LPDD), 485–519 (GVAA…EIMP), and 520–554 (SLGT…LVAS).

It belongs to the PPR family. P subfamily.

In Arabidopsis thaliana (Mouse-ear cress), this protein is Pentatricopeptide repeat-containing protein At2g01390.